Reading from the N-terminus, the 357-residue chain is Peptide chain release factor 1 (357 aa).

Gln234 is modified (N5-methylglutamine).

This sequence belongs to the prokaryotic/mitochondrial release factor family. Methylated by PrmC. Methylation increases the termination efficiency of RF1.

Its subcellular location is the cytoplasm. Its function is as follows. Peptide chain release factor 1 directs the termination of translation in response to the peptide chain termination codons UAG and UAA. The chain is Peptide chain release factor 1 from Frankia casuarinae (strain DSM 45818 / CECT 9043 / HFP020203 / CcI3).